Consider the following 316-residue polypeptide: MAPKAKIVLVGSGMIGGVMATLIVQKNLGDVVMFDIVKNMPHGKALDTSHTNVMAYSNCKVSGSNTYDDLKDADVVIVTAGFTKAPGKSDKEWNRDDLLPLNNKIMIEIGGHIKNNCPNAFIIVVTNPVDVMVQLLHQHSGVPKNKIVGLGGVLDTSRLKYYISQKLNVCPRDVNAHIVGAHGNKMVLLKRYITVGGIPLQEFINNKKITDQELDAIFDRTINTALEIVNLHASPYVAPAAAIIEMAESYIRDLRKVLICSTLLEGQYGHKDIFAGTPLVIGGNGVEQVIELQLNADEKKKFDEAVAETSRMKALI.

NAD(+) is bound by residues 13-15, 34-36, tyrosine 67, and 79-83; these read GMI, FDI, and TAGFT. Arginine 95 is a substrate binding site. Residues 125–127, leucine 150, and leucine 154 contribute to the NAD(+) site; that span reads VTN. Substrate is bound by residues arginine 158 and histidine 182. Histidine 182 serves as a coordination point for NAD(+). The active-site Proton acceptor is the histidine 182.

This sequence belongs to the LDH/MDH superfamily. LDH family. As to quaternary structure, homotetramer.

The enzyme catalyses (S)-lactate + NAD(+) = pyruvate + NADH + H(+). It functions in the pathway fermentation; pyruvate fermentation to lactate; (S)-lactate from pyruvate: step 1/1. The polypeptide is L-lactate dehydrogenase (Plasmodium berghei).